We begin with the raw amino-acid sequence, 249 residues long: Ubiquinone biosynthesis protein COQ4 homolog, mitochondrial (249 aa).

Residues His-134, Asp-135, His-138, and Glu-150 each coordinate Zn(2+).

It belongs to the COQ4 family. As to quaternary structure, component of a multi-subunit COQ enzyme complex. It depends on Zn(2+) as a cofactor.

It is found in the mitochondrion inner membrane. The enzyme catalyses a 4-hydroxy-3-methoxy-5-(all-trans-polyprenyl)benzoate + H(+) = a 2-methoxy-6-(all-trans-polyprenyl)phenol + CO2. Its pathway is cofactor biosynthesis; ubiquinone biosynthesis. In terms of biological role, lyase that catalyzes the C1-decarboxylation of 4-hydroxy-3-methoxy-5-(all-trans-polyprenyl)benzoic acid into 2-methoxy-6-(all-trans-polyprenyl)phenol during ubiquinone biosynthesis. This chain is Ubiquinone biosynthesis protein COQ4 homolog, mitochondrial, found in Trypanosoma brucei brucei (strain 927/4 GUTat10.1).